The chain runs to 44 residues: Antimicrobial peptide 1b (44 aa).

One can recognise a Chitin-binding type-1 domain in the interval 1-42 (AQKCGEQGRGAKCPNCLCCGRYGFCGSTPDYCGVGCQSQCRG). Cystine bridges form between Cys-4–Cys-19, Cys-13–Cys-25, Cys-16–Cys-43, Cys-18–Cys-32, and Cys-36–Cys-40.

In terms of processing, contains 5 disulfide bonds.

Functionally, binds chitin. Has antifungal activity against F.oxysporum 16/10 (IC(50)=4.1 uM) and B.sorokiniana 6/10 (IC(50)=2.7 uM). Inhibits germination of fungal spores. The chain is Antimicrobial peptide 1b from Leymus arenarius (Lyme grass).